Here is a 477-residue protein sequence, read N- to C-terminus: Glycogen synthase (477 aa).

Lys-15 is a binding site for ADP-alpha-D-glucose.

The protein belongs to the glycosyltransferase 1 family. Bacterial/plant glycogen synthase subfamily.

The catalysed reaction is [(1-&gt;4)-alpha-D-glucosyl](n) + ADP-alpha-D-glucose = [(1-&gt;4)-alpha-D-glucosyl](n+1) + ADP + H(+). The protein operates within glycan biosynthesis; glycogen biosynthesis. Synthesizes alpha-1,4-glucan chains using ADP-glucose. This chain is Glycogen synthase, found in Streptococcus pneumoniae serotype 4 (strain ATCC BAA-334 / TIGR4).